The sequence spans 442 residues: MSTSTVPPDGGEKVVVVGGNDWHEVVAAARAGAAAQAGERIVVNMGPQHPSTHGVLRLILEIEGEIITEARCGIGYLHTGIEKNLEYRNWTQGVTFVTRMDYLSPFFNETAYCLGVEKLLGITDDIPERASVIRVMLMELNRISSHLVALATGGMELGAMSAMFYGFREREEILRVFESITGLRMNHAYIRPGGLAADLPDDAITQVRRLVEILPKRLKDLEDLLNENYIWKARTVGVGYLDLTGCMALGITGPILRSTGLPHDLRKAQPYCGYENYEFDVITDDRCDSYGRYIIRVKEMHESVKIVEQCLARLKPGPVMISDKKLAWPADLKLGPDGLGNSPEHIAKIMGRSMEGLIHHFKLVTEGIRVPPGQVYVAVESPRGELGVHMVSDGGTRPYRVHYRDPSFTNLQAVAATCEGGMVADAIAAVASIDPVMGGVDR.

This sequence belongs to the complex I 49 kDa subunit family. In terms of assembly, NDH-1 is composed of 14 different subunits. Subunits NuoB, C, D, E, F, and G constitute the peripheral sector of the complex.

It is found in the cell membrane. The catalysed reaction is a quinone + NADH + 5 H(+)(in) = a quinol + NAD(+) + 4 H(+)(out). In terms of biological role, NDH-1 shuttles electrons from NADH, via FMN and iron-sulfur (Fe-S) centers, to quinones in the respiratory chain. The immediate electron acceptor for the enzyme in this species is believed to be a menaquinone. Couples the redox reaction to proton translocation (for every two electrons transferred, four hydrogen ions are translocated across the cytoplasmic membrane), and thus conserves the redox energy in a proton gradient. The polypeptide is NADH-quinone oxidoreductase subunit D (Mycolicibacterium smegmatis (strain ATCC 700084 / mc(2)155) (Mycobacterium smegmatis)).